The chain runs to 446 residues: Adenylosuccinate synthetase (446 aa).

GTP is bound by residues glycine 20–lysine 26 and glycine 48–threonine 50. Aspartate 21 acts as the Proton acceptor in catalysis. Residues aspartate 21 and glycine 48 each contribute to the Mg(2+) site. Residues aspartate 21 to lysine 24, asparagine 46 to histidine 49, threonine 137, arginine 151, glutamine 232, threonine 247, and arginine 319 each bind IMP. Histidine 49 functions as the Proton donor in the catalytic mechanism. Serine 315–arginine 321 lines the substrate pocket. Residues arginine 321, lysine 347–aspartate 349, and serine 429–glycine 431 each bind GTP.

The protein belongs to the adenylosuccinate synthetase family. In terms of assembly, homodimer. The cofactor is Mg(2+).

It localises to the cytoplasm. The catalysed reaction is IMP + L-aspartate + GTP = N(6)-(1,2-dicarboxyethyl)-AMP + GDP + phosphate + 2 H(+). The protein operates within purine metabolism; AMP biosynthesis via de novo pathway; AMP from IMP: step 1/2. Plays an important role in the de novo pathway of purine nucleotide biosynthesis. Catalyzes the first committed step in the biosynthesis of AMP from IMP. The protein is Adenylosuccinate synthetase of Ralstonia pickettii (strain 12J).